Consider the following 577-residue polypeptide: Isocitrate dehydrogenase kinase/phosphatase (577 aa).

ATP-binding positions include 315–321 (APGIRGM) and lysine 336. Residue aspartate 371 is part of the active site.

The protein belongs to the AceK family.

The protein localises to the cytoplasm. The catalysed reaction is L-seryl-[isocitrate dehydrogenase] + ATP = O-phospho-L-seryl-[isocitrate dehydrogenase] + ADP + H(+). Its function is as follows. Bifunctional enzyme which can phosphorylate or dephosphorylate isocitrate dehydrogenase (IDH) on a specific serine residue. This is a regulatory mechanism which enables bacteria to bypass the Krebs cycle via the glyoxylate shunt in response to the source of carbon. When bacteria are grown on glucose, IDH is fully active and unphosphorylated, but when grown on acetate or ethanol, the activity of IDH declines drastically concomitant with its phosphorylation. The polypeptide is Isocitrate dehydrogenase kinase/phosphatase (Escherichia fergusonii (strain ATCC 35469 / DSM 13698 / CCUG 18766 / IAM 14443 / JCM 21226 / LMG 7866 / NBRC 102419 / NCTC 12128 / CDC 0568-73)).